The following is a 509-amino-acid chain: ATP synthase subunit alpha (509 aa).

169 to 176 (GDRQTGKT) contacts ATP.

It belongs to the ATPase alpha/beta chains family. In terms of assembly, F-type ATPases have 2 components, CF(1) - the catalytic core - and CF(0) - the membrane proton channel. CF(1) has five subunits: alpha(3), beta(3), gamma(1), delta(1), epsilon(1). CF(0) has three main subunits: a(1), b(2) and c(9-12). The alpha and beta chains form an alternating ring which encloses part of the gamma chain. CF(1) is attached to CF(0) by a central stalk formed by the gamma and epsilon chains, while a peripheral stalk is formed by the delta and b chains.

Its subcellular location is the cell inner membrane. The enzyme catalyses ATP + H2O + 4 H(+)(in) = ADP + phosphate + 5 H(+)(out). Functionally, produces ATP from ADP in the presence of a proton gradient across the membrane. The alpha chain is a regulatory subunit. The sequence is that of ATP synthase subunit alpha from Methylorubrum extorquens (strain CM4 / NCIMB 13688) (Methylobacterium extorquens).